The following is a 411-amino-acid chain: Translation initiation factor 2 subunit gamma (411 aa).

One can recognise a tr-type G domain in the interval 9–203 (QAEVNIGMVG…AIEDFIPTPK (195 aa)). Residues 18–25 (GHVDHGKT) form a G1 region. Mg(2+) is bound by residues D21, T25, G46, and T48. 21–26 (DHGKTT) contributes to the GTP binding site. A G2 region spans residues 46–50 (GITIK). Zn(2+) contacts are provided by C61, C64, C73, and C76. The G3 stretch occupies residues 90–93 (DAPG). Residues 146-149 (NKIE) and 181-183 (SAL) contribute to the GTP site. The segment at 146-149 (NKIE) is G4. Positions 181–183 (SAL) are G5.

The protein belongs to the TRAFAC class translation factor GTPase superfamily. Classic translation factor GTPase family. EIF2G subfamily. In terms of assembly, heterotrimer composed of an alpha, a beta and a gamma chain. It depends on Mg(2+) as a cofactor.

The catalysed reaction is GTP + H2O = GDP + phosphate + H(+). Its function is as follows. eIF-2 functions in the early steps of protein synthesis by forming a ternary complex with GTP and initiator tRNA. The polypeptide is Translation initiation factor 2 subunit gamma (Pyrococcus abyssi (strain GE5 / Orsay)).